Reading from the N-terminus, the 241-residue chain is Platelet-derived growth factor subunit B (241 aa).

The N-terminal stretch at 1–20 (MNRCWALFLSLCCYLRLVSA) is a signal peptide. The propeptide at 21-81 (EGDPIPEELY…ELESLARGRR (61 aa)) is removed in mature form. A glycan (N-linked (GlcNAc...) asparagine) is linked at Asn-63. Disulfide bonds link Cys-97/Cys-141, Cys-130/Cys-178, and Cys-134/Cys-180. Positions 191 to 241 (RSPGGSQEQRAKTPQTRVTIRTVRVRRPPKGKHRKFKHTHDKTALKETLGA) are cleaved as a propeptide — removed in mature form. Residues 216 to 230 (RRPPKGKHRKFKHTH) are compositionally biased toward basic residues. A disordered region spans residues 216–241 (RRPPKGKHRKFKHTHDKTALKETLGA).

It belongs to the PDGF/VEGF growth factor family. In terms of assembly, antiparallel homodimer; disulfide-linked. Antiparallel heterodimer with PDGFA; disulfide-linked. The PDGFB homodimer interacts with PDGFRA and PDGFRB homodimers, and with heterodimers formed by PDGFRA and PDGFRB. The heterodimer composed of PDGFA and PDGFB interacts with PDGFRB homodimers, and with heterodimers formed by PDGFRA and PDGFRB. Interacts with XLKD1. Interacts with LRP1. Interacts with SORL1 (via the N-terminal ectodomain). Interacts with CD82; this interaction inhibits PDGFB-mediated signaling pathway. As to expression, expressed at high levels in the heart, brain (sustantia nigra), placenta and fetal kidney. Expressed at moderate levels in the brain (hippocampus), skeletal muscle, kidney and lung.

The protein resides in the secreted. Its function is as follows. Growth factor that plays an essential role in the regulation of embryonic development, cell proliferation, cell migration, survival and chemotaxis. Potent mitogen for cells of mesenchymal origin. Required for normal proliferation and recruitment of pericytes and vascular smooth muscle cells in the central nervous system, skin, lung, heart and placenta. Required for normal blood vessel development, and for normal development of kidney glomeruli. Plays an important role in wound healing. Signaling is modulated by the formation of heterodimers with PDGFA. The polypeptide is Platelet-derived growth factor subunit B (PDGFB) (Homo sapiens (Human)).